Consider the following 155-residue polypeptide: RNA pyrophosphohydrolase (155 aa).

A Nudix hydrolase domain is found at 5 to 147; sequence KYRPNVAAII…KRQVYRQVIA (143 aa). The Nudix box signature appears at 42-63; sequence GGIDEGETPLEALHRELLEEIG.

Belongs to the Nudix hydrolase family. RppH subfamily. A divalent metal cation serves as cofactor.

Functionally, accelerates the degradation of transcripts by removing pyrophosphate from the 5'-end of triphosphorylated RNA, leading to a more labile monophosphorylated state that can stimulate subsequent ribonuclease cleavage. The protein is RNA pyrophosphohydrolase of Helicobacter pylori (strain ATCC 700392 / 26695) (Campylobacter pylori).